Reading from the N-terminus, the 216-residue chain is ADP-ribosylation factor D (216 aa).

Residues 188 to 204 show a composition bias toward low complexity; that stretch reads SKFSFSNKSKQQKSNSQ. The tract at residues 188–216 is disordered; that stretch reads SKFSFSNKSKQQKSNSQPNTPRKNIQMMT. The span at 205-216 shows a compositional bias: polar residues; that stretch reads PNTPRKNIQMMT.

Belongs to the small GTPase superfamily. Arf family.

It is found in the golgi apparatus. GTP-binding protein involved in protein trafficking; may modulate vesicle budding and uncoating within the Golgi apparatus. The chain is ADP-ribosylation factor D (arrD) from Dictyostelium discoideum (Social amoeba).